The sequence spans 1173 residues: Ubiquitin conjugation factor E4 B (1173 aa).

N-acetylmethionine is present on M1. The interval 1–155 (MEELSADEIR…EPSSGPEVSE (155 aa)) is disordered. Residues 16 to 33 (RLAGGQTSQPTTPLTSPQ) show a composition bias toward low complexity. Phosphoserine is present on residues S23 and S31. Polar residues predominate over residues 51–64 (QSLGLNVHNMTPAT). Positions 76-99 (SQSSEGVSSLSSSPSNSLETQSQS) are enriched in low complexity. Phosphoserine is present on residues S84, S88, S90, S101, S103, S105, and S124. Residues 134–147 (NDRREKRSLSDKEP) show a composition bias toward basic and acidic residues. 3 positions are modified to phosphoserine: S238, S674, and S840. Residues 928-948 (NKEQWDQLPRDQQQARQSQLA) form a disordered region. Positions 937–948 (RDQQQARQSQLA) are enriched in low complexity. The U-box domain occupies 1098 to 1171 (DAPDEFRDPL…QAWMREKQSS (74 aa)). S1136 bears the Phosphoserine mark.

It belongs to the ubiquitin conjugation factor E4 family. In terms of assembly, interacts with VCP. Interacts with STUB1/CHIP and UNC45B. In terms of processing, proteolytically cleaved by caspases during apoptosis. Cleaved efficiently at Asp-123 by caspase-6 and granzyme B. Cleaved with approximately 10-fold less efficiency at Asp-109 by caspase-3 and caspase-7. Expressed predominantly in neuronal tissues. Also detected in liver, heart, brain, kidney and testis.

It is found in the cytoplasm. The protein localises to the nucleus. It carries out the reaction S-ubiquitinyl-[E2 ubiquitin-conjugating enzyme]-L-cysteine + [acceptor protein]-L-lysine = [E2 ubiquitin-conjugating enzyme]-L-cysteine + N(6)-ubiquitinyl-[acceptor protein]-L-lysine.. It functions in the pathway protein modification; protein ubiquitination. Functionally, ubiquitin-protein ligase that probably functions as an E3 ligase in conjunction with specific E1 and E2 ligases. May also function as an E4 ligase mediating the assembly of polyubiquitin chains on substrates ubiquitinated by another E3 ubiquitin ligase. May regulate myosin assembly in striated muscles together with STUB1 and VCP/p97 by targeting myosin chaperone UNC45B for proteasomal degradation. The polypeptide is Ubiquitin conjugation factor E4 B (Mus musculus (Mouse)).